The following is a 155-amino-acid chain: Aspartate carbamoyltransferase regulatory chain (155 aa).

Positions 109, 114, 138, and 141 each coordinate Zn(2+).

Belongs to the PyrI family. In terms of assembly, contains catalytic and regulatory chains. It depends on Zn(2+) as a cofactor.

Its function is as follows. Involved in allosteric regulation of aspartate carbamoyltransferase. In Vibrio cholerae serotype O1 (strain ATCC 39541 / Classical Ogawa 395 / O395), this protein is Aspartate carbamoyltransferase regulatory chain.